A 60-amino-acid chain; its full sequence is Insect toxin mu-NPTX-Nc1a (60 aa).

The signal sequence occupies residues 1–19 (MIYQVVLLLLVSPAPVSAA).

Contains 4 disulfide bonds. Expressed by the venom gland.

Its subcellular location is the secreted. Functionally, insect-specific toxin. Blocks voltage-gated potassium and sodium channels. The chain is Insect toxin mu-NPTX-Nc1a from Trichonephila clavata (Joro spider).